A 319-amino-acid chain; its full sequence is uncharacterized protein (319 aa).

The chain crosses the membrane as a helical span at residues 270-290; that stretch reads AAALWWIPAWLAMIVEVAVLG.

Its subcellular location is the membrane. This is an uncharacterized protein from Mycobacterium tuberculosis (strain CDC 1551 / Oshkosh).